We begin with the raw amino-acid sequence, 88 residues long: Small ribosomal subunit protein bS20 (88 aa).

It belongs to the bacterial ribosomal protein bS20 family.

Binds directly to 16S ribosomal RNA. The protein is Small ribosomal subunit protein bS20 of Natranaerobius thermophilus (strain ATCC BAA-1301 / DSM 18059 / JW/NM-WN-LF).